The chain runs to 190 residues: Imidazoleglycerol-phosphate dehydratase (190 aa).

It belongs to the imidazoleglycerol-phosphate dehydratase family.

The protein localises to the cytoplasm. It catalyses the reaction D-erythro-1-(imidazol-4-yl)glycerol 3-phosphate = 3-(imidazol-4-yl)-2-oxopropyl phosphate + H2O. It participates in amino-acid biosynthesis; L-histidine biosynthesis; L-histidine from 5-phospho-alpha-D-ribose 1-diphosphate: step 6/9. This is Imidazoleglycerol-phosphate dehydratase from Methanococcus maripaludis (strain C5 / ATCC BAA-1333).